Consider the following 342-residue polypeptide: Cathepsin B-like cysteine proteinase 1 (342 aa).

An N-terminal signal peptide occupies residues 1-18 (MKYLVLALCTYLCSQTGA). Residues 19-86 (DENAAQGIPL…VKEDPDPEVD (68 aa)) constitute a propeptide, activation peptide. N-linked (GlcNAc...) asparagine glycosylation is present at Asn99. 6 disulfides stabilise this stretch: Cys100/Cys128, Cys111/Cys156, Cys147/Cys214, Cys148/Cys152, Cys185/Cys218, and Cys193/Cys205. Residue Cys114 is part of the active site. Asn138 carries N-linked (GlcNAc...) asparagine glycosylation. Asn198 is a glycosylation site (N-linked (GlcNAc...) asparagine). The active site involves His285. Asn296 carries N-linked (GlcNAc...) asparagine glycosylation. The active site involves Asn305.

This sequence belongs to the peptidase C1 family.

Expression of the protease correlates with blood-feeding and suggests a role for the protease in blood digestion. This is Cathepsin B-like cysteine proteinase 1 (AC-1) from Haemonchus contortus (Barber pole worm).